We begin with the raw amino-acid sequence, 460 residues long: Ecdysteroid UDP-glucosyltransferase (460 aa).

The first 18 residues, 1-18, serve as a signal peptide directing secretion; the sequence is MFISILLLALAVERILCA.

It belongs to the UDP-glycosyltransferase family.

Catalyzes the transfer of glucose from UDP-glucose to ecdysteroids which are insect molting hormones. Expression of egt interferes with normal insect development and block molting. This is Ecdysteroid UDP-glucosyltransferase (EGT) from Lacanobia oleracea granulosis virus (LoGV).